A 100-amino-acid chain; its full sequence is Probable antitoxin MazE1 (100 aa).

Residues 77–100 (PYESEAERSAARARRNARQQRSAQ) form a disordered region.

As to quaternary structure, forms a complex with cognate toxin MazF1.

Its function is as follows. Probable antitoxin component of a type II toxin-antitoxin (TA) system. Labile antitoxin that binds to cognate MazF1 toxin and counteracts its endoribonuclease activity. This chain is Probable antitoxin MazE1 (mazE1), found in Mycobacterium bovis (strain ATCC BAA-935 / AF2122/97).